The chain runs to 224 residues: 7-cyano-7-deazaguanine synthase (224 aa).

12-22 (LSGGLDSSTVT) contributes to the ATP binding site. Residues Cys-193, Cys-201, Cys-204, and Cys-207 each coordinate Zn(2+).

The protein belongs to the QueC family. Requires Zn(2+) as cofactor.

The enzyme catalyses 7-carboxy-7-deazaguanine + NH4(+) + ATP = 7-cyano-7-deazaguanine + ADP + phosphate + H2O + H(+). Its pathway is purine metabolism; 7-cyano-7-deazaguanine biosynthesis. Its function is as follows. Catalyzes the ATP-dependent conversion of 7-carboxy-7-deazaguanine (CDG) to 7-cyano-7-deazaguanine (preQ(0)). The chain is 7-cyano-7-deazaguanine synthase from Prochlorococcus marinus (strain MIT 9515).